A 254-amino-acid chain; its full sequence is Probable protein ABIL5 (254 aa).

Positions 1-26 (MEVAEAGVDGVAGRRQQEEASGAAPF) are disordered.

It belongs to the ABI family. Binds SCAR.

Its subcellular location is the cytoplasm. The protein localises to the cytoskeleton. Functionally, involved in regulation of actin and microtubule organization. Part of a WAVE complex that activates the Arp2/3 complex. The polypeptide is Probable protein ABIL5 (Oryza sativa subsp. japonica (Rice)).